Here is a 186-residue protein sequence, read N- to C-terminus: LSM12 homolog B (186 aa).

The Sm domain maps to 1–74 (MSSLAPCFTV…CMDIEIVKEA (74 aa)). The AD domain maps to 84–186 (EPIDLPMIRE…VVQNFCSKQF (103 aa)).

Belongs to the LSM12 family. In terms of assembly, interacts with Sbat; along with Sbat and Vlet, may form an accessory subcomplex involved in SMN complex function.

Functionally, may have an accessory function in the survival motor neuron (SMN) complex. The chain is LSM12 homolog B from Drosophila melanogaster (Fruit fly).